Consider the following 1505-residue polypeptide: Synaptonemal complex protein 2 (1505 aa).

The interval 439–483 (EKSNLQKKLTNPLEPDNSSSQRDRKNSQDEITTPSRKKMSEASMI) is disordered. Residues Ser-457 and Ser-465 each carry the phosphoserine modification. A Phosphothreonine modification is found at Thr-471. Ser-494 carries the phosphoserine modification. Residue Thr-503 is modified to Phosphothreonine. Phosphoserine is present on residues Ser-507, Ser-516, Ser-525, and Ser-534. Residues 536 to 571 (KSRQSDGRNRGNNRANHNKTATVQNKGHEHHESPDQ) are disordered. Residues Thr-613 and Thr-638 each carry the phosphothreonine modification. 3 positions are modified to phosphoserine: Ser-651, Ser-655, and Ser-746. A disordered region spans residues 745 to 764 (KSPSRKSMRSHTKSRKELMS). Positions 748-758 (SRKSMRSHTKS) are enriched in basic residues. Ser-920 is modified (phosphoserine). Position 922 is a phosphothreonine (Thr-922). 2 disordered regions span residues 949–974 (YSRN…QPRS) and 1035–1080 (KEET…NGRE). Over residues 953–962 (KNTKKCKSIK) the composition is skewed to basic residues. A phosphoserine mark is found at Ser-1121, Ser-1123, Ser-1130, Ser-1146, Ser-1150, Ser-1162, Ser-1165, and Ser-1170. Residue Thr-1174 is modified to Phosphothreonine. Ser-1188 is subject to Phosphoserine. Residues 1199-1239 (NSYSDVSSNSSEKLYMEPESPDSCENHVQSKREENHAASPF) form a disordered region. Low complexity predominate over residues 1200 to 1209 (SYSDVSSNSS). Residues Ser-1218 and Ser-1221 each carry the phosphoserine modification. Residues 1222 to 1234 (CENHVQSKREENH) show a composition bias toward basic and acidic residues. A phosphoserine mark is found at Ser-1237, Ser-1280, and Ser-1283. Thr-1318 is subject to Phosphothreonine. The stretch at 1384 to 1435 (ENIDKFQVTLLDELEKVEKDSQTLRDLEKEFVDIEEKIVHKMRAFHQSERER) forms a coiled coil.

Belongs to the SYCP2 family. As to quaternary structure, component of the lateral elements of synaptonemal complexes. Interacts with TEX11. Heterodimer with SYCP3. Interacts with SYCP3, SMC1A and SMC3. In terms of processing, phosphorylated. Detected in spermatocytes and testis (at protein level). Spermatocytes and oocytes. Meiotic prophase cells.

It is found in the nucleus. It localises to the chromosome. Major component of the axial/lateral elements of synaptonemal complexes (SCS) during meiotic prophase. Plays a role in the assembly of synaptonemal complexes. Required for normal meiotic chromosome synapsis during oocyte and spermatocyte development and for normal male and female fertility. Required for insertion of SYCP3 into synaptonemal complexes. May be involved in the organization of chromatin by temporarily binding to DNA scaffold attachment regions. Requires SYCP3, but not SYCP1, in order to be incorporated into the axial/lateral elements. This chain is Synaptonemal complex protein 2 (Sycp2), found in Rattus norvegicus (Rat).